The following is a 430-amino-acid chain: MLDPNMLRNELDAVAEKLARRGFKLDVEMLRQQEERRKVLQVETESLQAERNSRSKLIGAAKARGEDIEPLRLEVNELGEKLDAAKAELDKLQNEIRDLALSIPNLPDDSVPVGKDENDNLEVSRWGEPRQYDFEVRDHVSLGEMAGGLDFAAAVKLTGARFVVMKGQIARMHRALAQFMLDLHTEKHGYLETYVPYLVNHATLYGTGQLPKFGGDLFHTKPLEEESDSSNYALIPTAEVPVTNLVRDEILEEESLPLKMTAHTPCFRSEAGSYGRDTRGLIRMHQFDKVEMVQITRPEDSMAALEELTGHAEKVLQLLELPYRKMLLCTGDMGFGSSKTYDLEVWLPAQNTYREISSCSNMWDFQARRMQARCRNKTDRKTRLVHTLNGSGLAVGRTLVAVLENYQQADGRIQVPEVLRPYMGGLEFIG.

237-239 contributes to the L-serine binding site; it reads TAE. 268–270 serves as a coordination point for ATP; that stretch reads RSE. Residue glutamate 291 coordinates L-serine. Residue 355-358 coordinates ATP; the sequence is EISS. Serine 391 serves as a coordination point for L-serine.

It belongs to the class-II aminoacyl-tRNA synthetase family. Type-1 seryl-tRNA synthetase subfamily. In terms of assembly, homodimer. The tRNA molecule binds across the dimer.

It is found in the cytoplasm. It carries out the reaction tRNA(Ser) + L-serine + ATP = L-seryl-tRNA(Ser) + AMP + diphosphate + H(+). The enzyme catalyses tRNA(Sec) + L-serine + ATP = L-seryl-tRNA(Sec) + AMP + diphosphate + H(+). Its pathway is aminoacyl-tRNA biosynthesis; selenocysteinyl-tRNA(Sec) biosynthesis; L-seryl-tRNA(Sec) from L-serine and tRNA(Sec): step 1/1. In terms of biological role, catalyzes the attachment of serine to tRNA(Ser). Is also able to aminoacylate tRNA(Sec) with serine, to form the misacylated tRNA L-seryl-tRNA(Sec), which will be further converted into selenocysteinyl-tRNA(Sec). In Yersinia enterocolitica serotype O:8 / biotype 1B (strain NCTC 13174 / 8081), this protein is Serine--tRNA ligase.